A 339-amino-acid polypeptide reads, in one-letter code: Anthranilate phosphoribosyltransferase (339 aa).

Residues glycine 79, 82-83, threonine 87, 89-92, 107-115, and serine 119 each bind 5-phospho-alpha-D-ribose 1-diphosphate; these read GD, NVST, and KHGNRAVSS. Glycine 79 serves as a coordination point for anthranilate. Serine 91 serves as a coordination point for Mg(2+). Anthranilate is bound at residue asparagine 110. Arginine 165 contacts anthranilate. Mg(2+)-binding residues include aspartate 224 and glutamate 225.

This sequence belongs to the anthranilate phosphoribosyltransferase family. Homodimer. It depends on Mg(2+) as a cofactor.

It catalyses the reaction N-(5-phospho-beta-D-ribosyl)anthranilate + diphosphate = 5-phospho-alpha-D-ribose 1-diphosphate + anthranilate. It functions in the pathway amino-acid biosynthesis; L-tryptophan biosynthesis; L-tryptophan from chorismate: step 2/5. In terms of biological role, catalyzes the transfer of the phosphoribosyl group of 5-phosphorylribose-1-pyrophosphate (PRPP) to anthranilate to yield N-(5'-phosphoribosyl)-anthranilate (PRA). This chain is Anthranilate phosphoribosyltransferase, found in Geobacillus kaustophilus (strain HTA426).